The chain runs to 194 residues: Crossover junction endodeoxyribonuclease RuvC (194 aa).

Catalysis depends on residues aspartate 8, glutamate 72, and aspartate 144. Aspartate 8, glutamate 72, and aspartate 144 together coordinate Mg(2+).

Belongs to the RuvC family. Homodimer which binds Holliday junction (HJ) DNA. The HJ becomes 2-fold symmetrical on binding to RuvC with unstacked arms; it has a different conformation from HJ DNA in complex with RuvA. In the full resolvosome a probable DNA-RuvA(4)-RuvB(12)-RuvC(2) complex forms which resolves the HJ. It depends on Mg(2+) as a cofactor.

It is found in the cytoplasm. The catalysed reaction is Endonucleolytic cleavage at a junction such as a reciprocal single-stranded crossover between two homologous DNA duplexes (Holliday junction).. Functionally, the RuvA-RuvB-RuvC complex processes Holliday junction (HJ) DNA during genetic recombination and DNA repair. Endonuclease that resolves HJ intermediates. Cleaves cruciform DNA by making single-stranded nicks across the HJ at symmetrical positions within the homologous arms, yielding a 5'-phosphate and a 3'-hydroxyl group; requires a central core of homology in the junction. The consensus cleavage sequence is 5'-(A/T)TT(C/G)-3'. Cleavage occurs on the 3'-side of the TT dinucleotide at the point of strand exchange. HJ branch migration catalyzed by RuvA-RuvB allows RuvC to scan DNA until it finds its consensus sequence, where it cleaves and resolves the cruciform DNA. In Psychrobacter sp. (strain PRwf-1), this protein is Crossover junction endodeoxyribonuclease RuvC.